The following is a 1357-amino-acid chain: MRAAILFCLVASSMAVPSGSLGSRPGTCPPQPSDQVMIEATRCSYVYGLTWDWNCNSQGQENYKCCQYENDIRICVPPIPADVDEEVGVEQPSQSVDQVRQAIQKTQDFIRKVGLYPAPDQRRRTTPTPDTVRWCVSSRCQMTKCQRMVSEFTYSPNMVPRKQWKCTQATSQEQCMFWIEQGWADIMTTREGQVYSANTTFNLKPIAYETTINDQQPEIQILKHYQNVTFALKSSRLVNPNTFSELRDKTTCHAGIDMPDFDMPASFADPVCNLIKEGVIPVTGNYIESFSDFVQESCVPGVLNMTYNKNGTYPLSLVTLCEDQQYKYSGIKGALSCLESGKGQVTFVDQKVIKKIMSDPNVRDNFQVVCRDESRPLDEEIFTDVTCHVGHTARPTIFINKNNTQQKETDIKTLVVKMMELYGNTDRDVNFNIFDSSVYDCGKCQMTGKPLNKNLIFLEESNTMKIVDDSKVYAGEVYAAYNVCSKLVPKPRAKICVTNVTEYEACRRFKGIAENIPEVKKVAWGCVLANSSIECMQAVHNNTADLFKANPMETFIAGKEFLLDPLMSVHRNDSVTMNHTYTRTLAVIKRSSLAKFPGLLSVPEGQPKYIKDLWKLKICSAGLKNFSAFHSPIGYLLANGTIPRIGSVFESVNRYFQATCVPEIEPETWRLDSDLLLGREMNWGFSSLNMYNFTGQEWLLWNTPATWNFLTYNRKVSTGLDIKKLIELKKQNLTSHIFNQNLSSPRNVELLDDLVGVEGISDLVKGVQDTIGPEGKQKMNMLRDRLSNSFPNFEAVRTLSDKVDIVNKMKDARQQRLQNKDHPFGNVIQETFQGHLMVDVFSKLLELRSDKISTLEEIISHVKTIPYLTDFKDVEITTVLKHPAIMSYVEIYFPRLSQTFVEPFDNVELREREFNRYTNPLWLSPKVHTYLDLVKNHQTEITKTCNSNLPLNFKGYEGALRCLKSGVADLASSTSRPSVTRTLRDTDLSTGWVHLQRPPPSLPQRQVVEIDVNMDIAKVCNFGEVMNPVLVTAYNTSGSWRWNITKALMIAHQSVALPALFGEGTVMGKDYDMLLPIAPLNQSYQPFLGSKPLRSMEAIVKASSYDWFKDQTGICYGETYTNIVKQRNETCQAIVKDVTCVGTPRMKKISVGRFGAKQFKMIKMCSRPSKFVRKMADFQCDNGFGYLKPVITAVACECMLCEEMIEYNTSFTEDNMWSDVSNKYVLTGEQDIYRQIPIWGNNSYFYDHTLNKNFELGNHSIIVEHVQTVVVERPSPGILSQVNSEVDPEVQVQMDSASLTKTCETVWNGQSWLPERFQGYKTSGSCVVPETGANAKSRVDRFRQIMQRKQQLVDHHH.

Residues 1–15 (MRAAILFCLVASSMA) form the signal peptide. Transferrin-like domains lie at 132–478 (VRWC…GEVY) and 493–1101 (AKIC…AIVK). Asn198, Asn227, Asn304, Asn310, Asn402, Asn499, Asn530, Asn541, Asn572, Asn578, Asn625, Asn639, Asn692, Asn732, Asn741, Asn1035, Asn1043, Asn1081, Asn1128, Asn1208, Asn1241, and Asn1258 each carry an N-linked (GlcNAc...) asparagine glycan.

It belongs to the transferrin family. In terms of tissue distribution, synthesized in the intestines of the females and males and also in ovaries and testis.

Its subcellular location is the secreted. Functionally, may serve the following two functions: a classical role as a yolk protein precursor and probably shuttle iron to developing germ cells. This is Major yolk protein from Strongylocentrotus purpuratus (Purple sea urchin).